The primary structure comprises 214 residues: Protein FAM167A (214 aa).

Disordered stretches follow at residues 1 to 26 and 59 to 108; these read MSVP…PDDH and PFPR…LSTG. Positions 118 to 156 form a coiled coil; sequence EAIAWLRKELTEMRLQDQQLARQLMRLRGDINKLKIEHT.

It belongs to the FAM167 (SEC) family. Expressed in skin, including primary keratinocytes, spleen, kidney, leukocytes, testis, lung, small intestine and prostate.

This Homo sapiens (Human) protein is Protein FAM167A (FAM167A).